We begin with the raw amino-acid sequence, 110 residues long: NADH-quinone oxidoreductase subunit K (110 aa).

The next 3 helical transmembrane spans lie at 13–33 (LNHY…GLFM), 41–61 (ILMS…AFSV), and 73–93 (IIIL…LLIY).

This sequence belongs to the complex I subunit 4L family. In terms of assembly, NDH-1 is composed of 14 different subunits. Subunits NuoA, H, J, K, L, M, N constitute the membrane sector of the complex.

It is found in the cell inner membrane. It carries out the reaction a quinone + NADH + 5 H(+)(in) = a quinol + NAD(+) + 4 H(+)(out). Functionally, NDH-1 shuttles electrons from NADH, via FMN and iron-sulfur (Fe-S) centers, to quinones in the respiratory chain. The immediate electron acceptor for the enzyme in this species is believed to be ubiquinone. Couples the redox reaction to proton translocation (for every two electrons transferred, four hydrogen ions are translocated across the cytoplasmic membrane), and thus conserves the redox energy in a proton gradient. This Rickettsia typhi (strain ATCC VR-144 / Wilmington) protein is NADH-quinone oxidoreductase subunit K.